A 235-amino-acid chain; its full sequence is DNA repair protein RecO (235 aa).

Belongs to the RecO family.

Its function is as follows. Involved in DNA repair and RecF pathway recombination. This is DNA repair protein RecO from Enterobacter sp. (strain 638).